The sequence spans 437 residues: 3-ketoacyl-CoA thiolase (437 aa).

The Acyl-thioester intermediate role is filled by cysteine 99. Residues histidine 392 and cysteine 422 each act as proton acceptor in the active site.

The protein belongs to the thiolase-like superfamily. Thiolase family. In terms of assembly, heterotetramer of two alpha chains (FadJ) and two beta chains (FadI).

The protein localises to the cytoplasm. It catalyses the reaction an acyl-CoA + acetyl-CoA = a 3-oxoacyl-CoA + CoA. The protein operates within lipid metabolism; fatty acid beta-oxidation. Catalyzes the final step of fatty acid oxidation in which acetyl-CoA is released and the CoA ester of a fatty acid two carbons shorter is formed. The sequence is that of 3-ketoacyl-CoA thiolase from Pectobacterium carotovorum subsp. carotovorum (strain PC1).